We begin with the raw amino-acid sequence, 321 residues long: Cytochrome c biogenesis protein CcsA (321 aa).

Transmembrane regions (helical) follow at residues 17–37, 43–63, 143–163, 225–245, 258–275, and 287–307; these read IISIVITIQLIDLLVYQIVGI, KGIIATFFCITGLLITRWIYS, MLLSYAALLCGALLSVAFLVI, VISLGFIFSTIGILSGAVWAN, ETWAFITWTIFAIYLHTR, and IVASIGFLIIWICYFGVNLLG.

It belongs to the CcmF/CycK/Ccl1/NrfE/CcsA family. As to quaternary structure, may interact with Ccs1.

The protein resides in the plastid. Its subcellular location is the chloroplast thylakoid membrane. Functionally, required during biogenesis of c-type cytochromes (cytochrome c6 and cytochrome f) at the step of heme attachment. This is Cytochrome c biogenesis protein CcsA from Drimys granadensis.